Here is a 3390-residue protein sequence, read N- to C-terminus: Genome polyprotein (3390 aa).

Residues 1 to 15 (MNNQRKKTGKPSINM) form an interaction with host EXOC1 region. At 1-100 (MNNQRKKTGK…MLSIINKRKK (100 aa)) the chain is on the cytoplasmic side. Residues 37–72 (LLNGQGPMKLVMAFIAFLRFLAIPPTAGVLARWGTF) are hydrophobic; homodimerization of capsid protein C. Residues 101–114 (TSLCLMMMLPATLA) constitute a propeptide, ER anchor for the capsid protein C, removed in mature form by serine protease NS3. Residues 101–118 (TSLCLMMMLPATLAFHLT) form a helical membrane-spanning segment. At 119-243 (SRDGEPRMIV…VEKVETWALR (125 aa)) the chain is on the extracellular side. The N-linked (GlcNAc...) asparagine; by host glycan is linked to N183. Residues 244 to 264 (HPGFTILALFLAHYIGTSLTQ) form a helical membrane-spanning segment. Position 265 (K265) is a topological domain, cytoplasmic. Residues 266 to 280 (VVIFILLMLVTPSMT) form a helical membrane-spanning segment. Residues 281–723 (MRCVGVGNRD…VHQIFGSAYT (443 aa)) lie on the Extracellular side of the membrane. 4 cysteine pairs are disulfide-bonded: C283/C310, C340/C401, C354/C385, and C372/C396. An N-linked (GlcNAc...) asparagine; by host glycan is attached at N347. Residues 378–391 (DRGWGNGCGLFGKG) form a fusion peptide region. N-linked (GlcNAc...) asparagine; by host glycosylation occurs at N433. 2 cysteine pairs are disulfide-bonded: C463/C563 and C580/C611. A helical transmembrane segment spans residues 724-744 (ALFSGVSWIMKIGIGVLLTWI). Residues 745 to 750 (GLNSKN) lie on the Cytoplasmic side of the membrane. A helical membrane pass occupies residues 751–771 (TSMSFSCIAIGIITLYLGVVV). Over 772–1193 (QADMGCVINW…MIGSNASDRM (422 aa)) the chain is Extracellular. 6 disulfide bridges follow: C777-C788, C828-C916, C952-C996, C1053-C1102, C1064-C1086, and C1085-C1089. 2 N-linked (GlcNAc...) asparagine; by host glycosylation sites follow: N903 and N980. 2 N-linked (GlcNAc...) asparagine; by host glycosylation sites follow: N1132 and N1188. Residues 1194 to 1218 (GMGVTYLALIATFKIQPFLALGFFL) traverse the membrane as a helical segment. The Cytoplasmic segment spans residues 1219–1224 (RKLTSR). A helical membrane pass occupies residues 1225 to 1243 (ENLLLGVGLAMAATLRLPE). Topologically, residues 1244-1267 (DIEQMANGIALGLMALKLITQFET) are lumenal. Residues 1268–1288 (YQLWTALVSLTCSNTIFTLTV) form a helical membrane-spanning segment. A topological domain (cytoplasmic) is located at residue A1289. A helical membrane pass occupies residues 1290–1308 (WRTATLILAGISLLPVCQS). Residues 1309–1315 (SSMRKTD) are Lumenal-facing. Residues 1316-1336 (WLPMTVAAMGVPPLPLFIFSL) form a helical membrane-spanning segment. The Cytoplasmic segment spans residues 1337–1344 (KDTLKRRS). The chain crosses the membrane as a helical span at residues 1345–1365 (WPLNEGVMAVGLVSILASSLL). Over 1366–1368 (RND) the chain is Lumenal. The helical transmembrane segment at 1369–1389 (VPMAGPLVAGGLLIACYVITG) threads the bilayer. Over 1390 to 1443 (TSADLTVEKAADVTWEEEAEQTGVSHNLMITVDDDGTMRIKDDETENILTVLLK) the chain is Cytoplasmic. Positions 1396-1435 (VEKAADVTWEEEAEQTGVSHNLMITVDDDGTMRIKDDETE) are interacts with and activates NS3 protease. Positions 1444–1464 (TALLIVSGIFPYSIPATMLVW) form an intramembrane region, helical. Residues 1465–2146 (HTWQKQTQRS…VEELPETMET (682 aa)) lie on the Cytoplasmic side of the membrane. In terms of domain architecture, Peptidase S7 spans 1474–1651 (SGVLWDVPSP…NAEPDGPTPE (178 aa)). Residues H1524, D1548, and S1608 each act as charge relay system; for serine protease NS3 activity in the active site. Positions 1654–1810 (EEMFKKRNLT…QSNAPIQDEE (157 aa)) constitute a Helicase ATP-binding domain. The tract at residues 1658-1661 (KKRN) is important for RNA-binding. An ATP-binding site is contributed by 1667-1674 (LHPGSGKT). The DEAH box signature appears at 1758–1761 (DEAH). The 166-residue stretch at 1821–1986 (GNEWITDFVG…GIIPALFEPE (166 aa)) folds into the Helicase C-terminal domain. An N6-acetyllysine; by host modification is found at K1862. A helical membrane pass occupies residues 2147–2167 (LLLLGLMILLTGGAMLFLISG). The Lumenal segment spans residues 2168 to 2169 (KG). Residues 2170–2190 (IGKTSIGLICVIASSGMLWMA) constitute an intramembrane region (helical). Residue D2191 is a topological domain, lumenal. A helical membrane pass occupies residues 2192–2212 (VPLQWIASAIVLEFFMMVLLI). Residues 2213–2227 (PEPEKQRTPQDNQLA) lie on the Cytoplasmic side of the membrane. A helical transmembrane segment spans residues 2228–2248 (YVVIGILTLAAIVAANEMGLL). Residues 2249 to 2273 (ETTKRDLGMSKEPGVVSPTSYLDVD) lie on the Lumenal side of the membrane. Residues 2274-2294 (LHPASAWTLYAVATTVITPML) constitute an intramembrane region (helical). Residues 2295–2305 (RHTIENSTANV) are Lumenal-facing. N-linked (GlcNAc...) asparagine; by host glycans are attached at residues N2300 and N2304. Positions 2306-2326 (SLAAIANQAVVLMGLDKGWPI) form an intramembrane region, helical. Over 2327–2346 (SKMDLGVPLLALGCYSQVNP) the chain is Lumenal. The helical transmembrane segment at 2347-2367 (LTLIAAVLLLVTHYAIIGPGL) threads the bilayer. The Cytoplasmic portion of the chain corresponds to 2368–2412 (QAKATREAQKRTAAGIMKNPTVDGIMTIDLDPVIYDSKFEKQLGQ). Residues 2413–2433 (VMLLVLCAVQLLLMRTSWALC) traverse the membrane as a helical segment. At 2434–2458 (EVLTLATGPITTLWEGSPGKFWNTT) the chain is on the lumenal side. N2456 carries N-linked (GlcNAc...) asparagine; by host glycosylation. The chain crosses the membrane as a helical span at residues 2459–2479 (IAVSMANIFRGSYLAGAGLAL). The Cytoplasmic portion of the chain corresponds to 2480-3390 (SIMKSVGTGK…KEEESEGAIW (911 aa)). Positions 2492-2753 (TGSQGETLGE…DVDLGAGTRH (262 aa)) constitute an mRNA cap 0-1 NS5-type MT domain. S-adenosyl-L-methionine is bound at residue S2546. S2546 bears the Phosphoserine mark. Residue K2551 is the For 2'-O-MTase activity of the active site. The short motif at 2567 to 2570 (VIDL) is the SUMO-interacting motif element. G2576, W2577, T2594, K2595, D2621, and V2622 together coordinate S-adenosyl-L-methionine. D2636 acts as the For 2'-O-MTase activity in catalysis. I2637 is a binding site for S-adenosyl-L-methionine. Active-site for 2'-O-MTase activity residues include K2670 and E2706. Residue Y2708 participates in S-adenosyl-L-methionine binding. Zn(2+) contacts are provided by E2927, H2931, C2936, and C2939. A RdRp catalytic domain is found at 3018-3168 (AMYADDTAGW…PIDDRFANAL (151 aa)). 3 residues coordinate Zn(2+): H3202, C3218, and C3337.

In the N-terminal section; belongs to the class I-like SAM-binding methyltransferase superfamily. mRNA cap 0-1 NS5-type methyltransferase family. As to quaternary structure, homodimer. Interacts (via N-terminus) with host EXOC1 (via C-terminus); this interaction results in EXOC1 degradation through the proteasome degradation pathway. In terms of assembly, forms heterodimers with envelope protein E in the endoplasmic reticulum and Golgi. Homodimer; in the endoplasmic reticulum and Golgi. Interacts with protein prM. Interacts with non-structural protein 1. As to quaternary structure, homodimer; Homohexamer when secreted. Interacts with envelope protein E. In terms of assembly, interacts (via N-terminus) with serine protease NS3. Forms a heterodimer with serine protease NS3. May form homooligomers. As to quaternary structure, forms a heterodimer with NS2B. Interacts with NS4B. Interacts with unphosphorylated RNA-directed RNA polymerase NS5; this interaction stimulates RNA-directed RNA polymerase NS5 guanylyltransferase activity. Interacts with host SHFL. In terms of assembly, interacts with host MAVS; this interaction inhibits the synthesis of IFN-beta. Interacts with host SHFL. Interacts with host AUP1; the interaction occurs in the presence of Dengue virus NS4B and induces lipophagy which facilitates production of virus progeny particles. Interacts with serine protease NS3. As to quaternary structure, homodimer. Interacts with host STAT2; this interaction inhibits the phosphorylation of the latter, and, when all viral proteins are present (polyprotein), targets STAT2 for degradation. Interacts with serine protease NS3. Post-translationally, specific enzymatic cleavages in vivo yield mature proteins. Cleavages in the lumen of endoplasmic reticulum are performed by host signal peptidase, whereas cleavages in the cytoplasmic side are performed by serine protease NS3. Signal cleavage at the 2K-4B site requires a prior NS3 protease-mediated cleavage at the 4A-2K site. In terms of processing, cleaved in post-Golgi vesicles by a host furin, releasing the mature small envelope protein M, and peptide pr. This cleavage is incomplete as up to 30% of viral particles still carry uncleaved prM. N-glycosylated. Post-translationally, N-glycosylated. The excreted form is glycosylated and this is required for efficient secretion of the protein from infected cells. In terms of processing, acetylated by host KAT5. Acetylation modulates NS3 RNA-binding and unwinding activities and plays an important positive role for viral replication. Sumoylation of RNA-directed RNA polymerase NS5 increases NS5 protein stability allowing proper viral RNA replication. Post-translationally, phosphorylated on serines residues. This phosphorylation may trigger NS5 nuclear localization.

The protein resides in the virion. It localises to the host nucleus. The protein localises to the host cytoplasm. Its subcellular location is the host perinuclear region. It is found in the secreted. The protein resides in the virion membrane. It localises to the host endoplasmic reticulum membrane. The protein localises to the host mitochondrion. It catalyses the reaction Selective hydrolysis of -Xaa-Xaa-|-Yaa- bonds in which each of the Xaa can be either Arg or Lys and Yaa can be either Ser or Ala.. The catalysed reaction is RNA(n) + a ribonucleoside 5'-triphosphate = RNA(n+1) + diphosphate. It carries out the reaction a ribonucleoside 5'-triphosphate + H2O = a ribonucleoside 5'-diphosphate + phosphate + H(+). The enzyme catalyses ATP + H2O = ADP + phosphate + H(+). It catalyses the reaction a 5'-end (5'-triphosphoguanosine)-ribonucleoside in mRNA + S-adenosyl-L-methionine = a 5'-end (N(7)-methyl 5'-triphosphoguanosine)-ribonucleoside in mRNA + S-adenosyl-L-homocysteine. The catalysed reaction is a 5'-end (N(7)-methyl 5'-triphosphoguanosine)-ribonucleoside in mRNA + S-adenosyl-L-methionine = a 5'-end (N(7)-methyl 5'-triphosphoguanosine)-(2'-O-methyl-ribonucleoside) in mRNA + S-adenosyl-L-homocysteine + H(+). Its function is as follows. Plays a role in virus budding by binding to the cell membrane and gathering the viral RNA into a nucleocapsid that forms the core of a mature virus particle. During virus entry, may induce genome penetration into the host cytoplasm after hemifusion induced by the surface proteins. Can migrate to the cell nucleus where it modulates host functions. Overcomes the anti-viral effects of host EXOC1 by sequestering and degrading the latter through the proteasome degradation pathway. Functionally, inhibits RNA silencing by interfering with host Dicer. In terms of biological role, prevents premature fusion activity of envelope proteins in trans-Golgi by binding to envelope protein E at pH6.0. After virion release in extracellular space, gets dissociated from E dimers. Acts as a chaperone for envelope protein E during intracellular virion assembly by masking and inactivating envelope protein E fusion peptide. prM is the only viral peptide matured by host furin in the trans-Golgi network probably to avoid catastrophic activation of the viral fusion activity in acidic Golgi compartment prior to virion release. prM-E cleavage is inefficient, and many virions are only partially matured. These uncleaved prM would play a role in immune evasion. Its function is as follows. May play a role in virus budding. Exerts cytotoxic effects by activating a mitochondrial apoptotic pathway through M ectodomain. May display a viroporin activity. Functionally, binds to host cell surface receptor and mediates fusion between viral and cellular membranes. Envelope protein is synthesized in the endoplasmic reticulum in the form of heterodimer with protein prM. They play a role in virion budding in the ER, and the newly formed immature particle is covered with 60 spikes composed of heterodimer between precursor prM and envelope protein E. The virion is transported to the Golgi apparatus where the low pH causes dissociation of PrM-E heterodimers and formation of E homodimers. prM-E cleavage is inefficient, and many virions are only partially matured. These uncleaved prM would play a role in immune evasion. In terms of biological role, involved in immune evasion, pathogenesis and viral replication. Once cleaved off the polyprotein, is targeted to three destinations: the viral replication cycle, the plasma membrane and the extracellular compartment. Essential for viral replication. Required for formation of the replication complex and recruitment of other non-structural proteins to the ER-derived membrane structures. Excreted as a hexameric lipoparticle that plays a role against host immune response. Antagonizing the complement function. Binds to the host macrophages and dendritic cells. Inhibits signal transduction originating from Toll-like receptor 3 (TLR3). Disrupts the host endothelial glycocalyx layer of host pulmonary microvascular endothelial cells, inducing degradation of sialic acid and shedding of heparan sulfate proteoglycans. NS1 induces expression of sialidases, heparanase, and activates cathepsin L, which activates heparanase via enzymatic cleavage. These effects are probably linked to the endothelial hyperpermeability observed in severe dengue disease. Its function is as follows. Component of the viral RNA replication complex that functions in virion assembly and antagonizes the host immune response. Functionally, required cofactor for the serine protease function of NS3. May have membrane-destabilizing activity and form viroporins. In terms of biological role, displays three enzymatic activities: serine protease, NTPase and RNA helicase. NS3 serine protease, in association with NS2B, performs its autocleavage and cleaves the polyprotein at dibasic sites in the cytoplasm: C-prM, NS2A-NS2B, NS2B-NS3, NS3-NS4A, NS4A-2K and NS4B-NS5. NS3 RNA helicase binds RNA and unwinds dsRNA in the 3' to 5' direction. Regulates the ATPase activity of the NS3 helicase activity. NS4A allows NS3 helicase to conserve energy during unwinding. Plays a role in the inhibition of the host innate immune response. Interacts with host MAVS and thereby prevents the interaction between RIGI and MAVS. In turn, IFN-beta production is impaired. Interacts with host AUP1 which mediates induction of lipophagy in host cells and facilitates production of virus progeny particles. Its function is as follows. Functions as a signal peptide for NS4B and is required for the interferon antagonism activity of the latter. Functionally, induces the formation of ER-derived membrane vesicles where the viral replication takes place. Inhibits interferon (IFN)-induced host STAT1 phosphorylation and nuclear translocation, thereby preventing the establishment of cellular antiviral state by blocking the IFN-alpha/beta pathway. In terms of biological role, replicates the viral (+) and (-) RNA genome, and performs the capping of genomes in the cytoplasm. NS5 methylates viral RNA cap at guanine N-7 and ribose 2'-O positions. Besides its role in RNA genome replication, also prevents the establishment of cellular antiviral state by blocking the interferon-alpha/beta (IFN-alpha/beta) signaling pathway. Inhibits host TYK2 and STAT2 phosphorylation, thereby preventing activation of JAK-STAT signaling pathway. The protein is Genome polyprotein of Dengue virus type 3 (strain Philippines/H87/1956) (DENV-3).